Reading from the N-terminus, the 566-residue chain is Proline--tRNA ligase (566 aa).

Belongs to the class-II aminoacyl-tRNA synthetase family. ProS type 1 subfamily. Homodimer.

It is found in the cytoplasm. The catalysed reaction is tRNA(Pro) + L-proline + ATP = L-prolyl-tRNA(Pro) + AMP + diphosphate. Catalyzes the attachment of proline to tRNA(Pro) in a two-step reaction: proline is first activated by ATP to form Pro-AMP and then transferred to the acceptor end of tRNA(Pro). As ProRS can inadvertently accommodate and process non-cognate amino acids such as alanine and cysteine, to avoid such errors it has two additional distinct editing activities against alanine. One activity is designated as 'pretransfer' editing and involves the tRNA(Pro)-independent hydrolysis of activated Ala-AMP. The other activity is designated 'posttransfer' editing and involves deacylation of mischarged Ala-tRNA(Pro). The misacylated Cys-tRNA(Pro) is not edited by ProRS. This is Proline--tRNA ligase from Bacillus cereus (strain AH187).